Reading from the N-terminus, the 757-residue chain is MRRLIPIAITGSLLWGAAVQAQGPTAAEREAYFAERQRALCGPPLVMPLDAVDTALRHRPETPATVDADAIYYDGAAGRYRFRGDVLMQRLDQRLRSEEVRYDHASGRVDLPFPFVYEEAGLALTGESGWLQLREDRGEVVAGEFMLDERNIRGRAERLELADAQRSRYEDVGYTTCRPGNEDWWLQARELELDREEGLGTARHAWFTFLNVPLFYTPWITFPIDDRRRTGLLAPGFATSDRHGTDITVPVYWNIAPNYDATLVPRWIERRGALLGGEFRYLQEAFSGELYGEYLPNDSLARDDRWLLGIDHRGRLPRGWRYDADINRASDGDYLRDFGSGLLETSSSHLQSRGRLRNRWNDWAVAAEVQHWQTLDDDLRNPYRREPRLTADYQGPFRAGQPRYRLNTEYTRFALPDTDADRPEGERMDIAPRVEWRLHRPWGYLTPAAALRHTQYRLDDPVPGADDRSPRRTVPTFSVDSGLFFDRPFDWDGRPMVQTLEPRVFYVYTPERRQDDLPVFDTSRRDFFFDGLFREDRFSGADRVGDADQVTVALTTRFVDLGGGREWLRASLGQIHYRRDRQVTLFPETDRAADRRSRSDYMAEMRSELPGGVLAQGEYRYNPYDSRSEQGAFRLGWHPRPDLLVGAGYRMRYGDEGRDVEQSDLAAVIPLGPRFSLIGRWLYSLADDNSLETVGGLEYRTCCWRVRAMGRRSFEGAGAEPDTSIMLQFEFTGLGQVDSGSTDFLQDSIYGYEGDRF.

The first 21 residues, 1–21, serve as a signal peptide directing secretion; it reads MRRLIPIAITGSLLWGAAVQA.

It belongs to the LptD family. In terms of assembly, component of the lipopolysaccharide transport and assembly complex. Interacts with LptE and LptA.

It is found in the cell outer membrane. In terms of biological role, together with LptE, is involved in the assembly of lipopolysaccharide (LPS) at the surface of the outer membrane. This Alkalilimnicola ehrlichii (strain ATCC BAA-1101 / DSM 17681 / MLHE-1) protein is LPS-assembly protein LptD.